A 444-amino-acid chain; its full sequence is Serine carboxypeptidase-like 50 (444 aa).

An N-terminal signal peptide occupies residues 1 to 22 (MEQATTLFILLSTLLLAVSVES). Residues C79 and C308 are joined by a disulfide bond. Residue S170 is part of the active site. N263 is a glycosylation site (N-linked (GlcNAc...) asparagine). Residue D345 is part of the active site. A glycan (N-linked (GlcNAc...) asparagine) is linked at N361. H403 is a catalytic residue.

The protein belongs to the peptidase S10 family. In terms of tissue distribution, ubiquitous.

The protein resides in the secreted. Its function is as follows. Probable carboxypeptidase. The chain is Serine carboxypeptidase-like 50 (SCPL50) from Arabidopsis thaliana (Mouse-ear cress).